Here is a 175-residue protein sequence, read N- to C-terminus: Peptide methionine sulfoxide reductase MsrA (175 aa).

Cysteine 12 is an active-site residue.

Belongs to the MsrA Met sulfoxide reductase family.

The enzyme catalyses L-methionyl-[protein] + [thioredoxin]-disulfide + H2O = L-methionyl-(S)-S-oxide-[protein] + [thioredoxin]-dithiol. It catalyses the reaction [thioredoxin]-disulfide + L-methionine + H2O = L-methionine (S)-S-oxide + [thioredoxin]-dithiol. In terms of biological role, has an important function as a repair enzyme for proteins that have been inactivated by oxidation. Catalyzes the reversible oxidation-reduction of methionine sulfoxide in proteins to methionine. In Limosilactobacillus reuteri (strain DSM 20016) (Lactobacillus reuteri), this protein is Peptide methionine sulfoxide reductase MsrA.